The following is a 513-amino-acid chain: Maturase K (513 aa).

The protein belongs to the intron maturase 2 family. MatK subfamily.

The protein resides in the plastid. The protein localises to the chloroplast. Its function is as follows. Usually encoded in the trnK tRNA gene intron. Probably assists in splicing its own and other chloroplast group II introns. The protein is Maturase K of Sporobolus indicus (Smut grass).